The primary structure comprises 442 residues: MSEIGSYHDTIFALSSGRLPSGVAVIRISGPKTRFVYETICQAIPEPRHAALLTFRSRNGDAIDRGLTLFFPAPHSFTGEDCAEFHLHGGKAVVEKMLAVLGELPGCRIAEAGEFTRRAFANGKMDLTIAEGLADLIAAETEGQRRLAMQVASGNQRKLYSEWRQRLINARAFIEAELDFADESDVPGSVSMQVWQQLSALKHEIEHHIASGKRAAMLRDGLHVVIVGAPNAGKSSLLNFLAGRDVAIISEEAGTTRDLLEVKLDLGGIPVYVTDTAGLRETDSVVEKIGIERARARMAEADLVLSLEDMSGPVSVTVEKIEAETWLIGTKADLGGSASGLWKYHISTMTGSGLEQLLDALQAFAEAKIGQIEDAVPTRQRHINLLRATIEEIEKAIEGDDLPLELRAENMRLASQFLGRITGDVDVEEILDVMFSQFCIGK.

(6S)-5-formyl-5,6,7,8-tetrahydrofolate is bound by residues Arg-27, Glu-84, and Lys-124. The TrmE-type G domain occupies 221–366 (GLHVVIVGAP…LLDALQAFAE (146 aa)). GTP is bound by residues 231–236 (NAGKSS), 250–256 (SEEAGTT), and 275–278 (DTAG). Positions 235 and 256 each coordinate Mg(2+). Lys-442 serves as a coordination point for (6S)-5-formyl-5,6,7,8-tetrahydrofolate.

It belongs to the TRAFAC class TrmE-Era-EngA-EngB-Septin-like GTPase superfamily. TrmE GTPase family. Homodimer. Heterotetramer of two MnmE and two MnmG subunits. It depends on K(+) as a cofactor.

Its subcellular location is the cytoplasm. Functionally, exhibits a very high intrinsic GTPase hydrolysis rate. Involved in the addition of a carboxymethylaminomethyl (cmnm) group at the wobble position (U34) of certain tRNAs, forming tRNA-cmnm(5)s(2)U34. The polypeptide is tRNA modification GTPase MnmE (Brucella abortus (strain 2308)).